We begin with the raw amino-acid sequence, 329 residues long: Ribosomal RNA small subunit methyltransferase C (329 aa).

It belongs to the methyltransferase superfamily. RsmC family. As to quaternary structure, monomer.

The protein resides in the cytoplasm. It catalyses the reaction guanosine(1207) in 16S rRNA + S-adenosyl-L-methionine = N(2)-methylguanosine(1207) in 16S rRNA + S-adenosyl-L-homocysteine + H(+). Functionally, specifically methylates the guanine in position 1207 of 16S rRNA in the 30S particle. This is Ribosomal RNA small subunit methyltransferase C from Haemophilus ducreyi (strain 35000HP / ATCC 700724).